A 429-amino-acid polypeptide reads, in one-letter code: C4-dicarboxylate transport protein (429 aa).

8 helical membrane passes run V9 to P29, L45 to M65, L79 to I99, G149 to G169, V185 to M205, L223 to A243, I308 to M328, and A356 to I376.

This sequence belongs to the dicarboxylate/amino acid:cation symporter (DAACS) (TC 2.A.23) family.

Its subcellular location is the cell inner membrane. Its function is as follows. Responsible for the transport of dicarboxylates such as succinate, fumarate, and malate from the periplasm across the membrane. The protein is C4-dicarboxylate transport protein of Burkholderia multivorans (strain ATCC 17616 / 249).